The chain runs to 512 residues: Ferredoxin--nitrite reductase (512 aa).

Positions 396, 402, 437, and 441 each coordinate [4Fe-4S] cluster. Position 441 (C441) interacts with siroheme.

Belongs to the nitrite and sulfite reductase 4Fe-4S domain family.

The enzyme catalyses 6 oxidized [2Fe-2S]-[ferredoxin] + NH4(+) + 2 H2O = nitrite + 6 reduced [2Fe-2S]-[ferredoxin] + 8 H(+). This is Ferredoxin--nitrite reductase (nirA) from Synechococcus elongatus (strain ATCC 33912 / PCC 7942 / FACHB-805) (Anacystis nidulans R2).